The sequence spans 344 residues: Nicotinate-nucleotide--dimethylbenzimidazole phosphoribosyltransferase (344 aa).

Catalysis depends on E305, which acts as the Proton acceptor.

This sequence belongs to the CobT family.

It carries out the reaction 5,6-dimethylbenzimidazole + nicotinate beta-D-ribonucleotide = alpha-ribazole 5'-phosphate + nicotinate + H(+). It functions in the pathway nucleoside biosynthesis; alpha-ribazole biosynthesis; alpha-ribazole from 5,6-dimethylbenzimidazole: step 1/2. Catalyzes the synthesis of alpha-ribazole-5'-phosphate from nicotinate mononucleotide (NAMN) and 5,6-dimethylbenzimidazole (DMB). The polypeptide is Nicotinate-nucleotide--dimethylbenzimidazole phosphoribosyltransferase (Agrobacterium fabrum (strain C58 / ATCC 33970) (Agrobacterium tumefaciens (strain C58))).